Consider the following 558-residue polypeptide: Laccase-4 (558 aa).

The signal sequence occupies residues 1 to 24 (MGSHMVWFLFLVSFFSVFPAPSES). Plastocyanin-like domains follow at residues 32-148 (NVVM…PKRG) and 158-308 (NEKV…YSGT). Asn-37 and Asn-78 each carry an N-linked (GlcNAc...) asparagine glycan. Cu cation is bound by residues His-82 and His-84. Asn-114 is a glycosylation site (N-linked (GlcNAc...) asparagine). Positions 127 and 129 each coordinate Cu cation. Residues Asn-187, Asn-296, Asn-323, Asn-330, Asn-373, Asn-383, Asn-400, Asn-418, and Asn-441 are each glycosylated (N-linked (GlcNAc...) asparagine). A Plastocyanin-like 3 domain is found at 408–542 (DFPKNPPHVF…KMAFLVENGK (135 aa)). His-459, His-462, and His-464 together coordinate Cu cation. N-linked (GlcNAc...) asparagine glycosylation is present at Asn-479. Cu cation is bound by residues His-521, Cys-522, His-523, and His-527. Asn-545 carries N-linked (GlcNAc...) asparagine glycosylation.

The protein belongs to the multicopper oxidase family. Requires Cu cation as cofactor. As to expression, ubiquitous, with higher levels in the inflorescence stem.

It localises to the secreted. Its subcellular location is the extracellular space. The protein resides in the apoplast. The catalysed reaction is 4 hydroquinone + O2 = 4 benzosemiquinone + 2 H2O. Functionally, lignin degradation and detoxification of lignin-derived products. Required for secondary xylem cell wall lignification. This Arabidopsis thaliana (Mouse-ear cress) protein is Laccase-4 (IRX12).